The primary structure comprises 92 residues: Protein EMB-1 (92 aa).

3 stretches are compositionally biased toward basic and acidic residues: residues 1–16 (MASQ…RARQ), 37–61 (AEGR…EMGR), and 72–92 (GGER…RTKK). The disordered stretch occupies residues 1-92 (MASQQEKKEL…IDESKFRTKK (92 aa)).

The protein belongs to the small hydrophilic plant seed protein family. Expressed in embryogenic cells, somatic embryos and seeds at the later stages of development. In the embryos, expressed in the procambium, the root and shoot meristem and the protoderm of the cotyledons. Not detected in the endosperm or the aleurone layer, in young leaves or roots.

It is found in the nucleus. The polypeptide is Protein EMB-1 (Daucus carota (Wild carrot)).